A 447-amino-acid polypeptide reads, in one-letter code: Phosphoglucosamine mutase (447 aa).

The active-site Phosphoserine intermediate is the S101. Mg(2+) is bound by residues S101, D242, D244, and D246. A Phosphoserine modification is found at S101.

The protein belongs to the phosphohexose mutase family. Requires Mg(2+) as cofactor. In terms of processing, activated by phosphorylation.

The enzyme catalyses alpha-D-glucosamine 1-phosphate = D-glucosamine 6-phosphate. In terms of biological role, catalyzes the conversion of glucosamine-6-phosphate to glucosamine-1-phosphate. The polypeptide is Phosphoglucosamine mutase (Methylobacterium radiotolerans (strain ATCC 27329 / DSM 1819 / JCM 2831 / NBRC 15690 / NCIMB 10815 / 0-1)).